A 225-amino-acid polypeptide reads, in one-letter code: AA9 family lytic polysaccharide monooxygenase A (225 aa).

The first 17 residues, 1–17 (MLTTTFALLTAALGVSA), serve as a signal peptide directing secretion. 2 residues coordinate Cu(2+): histidine 18 and histidine 85. 2 disulfide bridges follow: cysteine 55-cysteine 173 and cysteine 143-cysteine 225. O2 contacts are provided by histidine 159 and glutamine 168. Tyrosine 170 contacts Cu(2+).

It belongs to the polysaccharide monooxygenase AA9 family. It depends on Cu(2+) as a cofactor.

The protein localises to the secreted. It catalyses the reaction [(1-&gt;4)-beta-D-glucosyl]n+m + reduced acceptor + O2 = 4-dehydro-beta-D-glucosyl-[(1-&gt;4)-beta-D-glucosyl]n-1 + [(1-&gt;4)-beta-D-glucosyl]m + acceptor + H2O.. Is able to utilize various natural phenolic compounds as reducing agents. Most of these reducing agents are present in plants, either free or as lignin building blocks, such as sinapic acid, or as flavonoids such as catechin and dopamine. Phenolic compounds with 1,2-benzenediol and 1,2,3-benzenetriol moieties yield the highest release of oxidized and non-oxidized glucooligosaccharides from cellulose compared to monophenols or sulfur-containing compounds. Lytic polysaccharide monooxygenase (LPMO) that depolymerizes crystalline and amorphous polysaccharides via the oxidation of scissile alpha- or beta-(1-4)-glycosidic bonds, yielding C1 or C4 oxidation products. Catalysis by LPMOs requires the reduction of the active-site copper from Cu(II) to Cu(I) by a reducing agent and H(2)O(2) or O(2) as a cosubstrate. Shows oxidative cleavage of xylan in addition to cellulose. Shows a strong synergistic effect with endoglucanase I (EGI) with a 16-fold higher release of detected oligosaccharides. The sequence is that of AA9 family lytic polysaccharide monooxygenase A from Thermothelomyces thermophilus (strain ATCC 42464 / BCRC 31852 / DSM 1799) (Sporotrichum thermophile).